The sequence spans 1200 residues: Zinc finger protein 804A (1200 aa).

A C2H2-type zinc finger spans residues 57–81; it reads FYCELCDKQYYKHQEFDNHINSYDH. 6 disordered regions span residues 252–280, 343–367, 582–687, 727–777, 799–828, and 874–949; these read STSHLQLPPPTCELLSSEEKGNSPPPEAM, DGPVSKSNPNIIEKNPTVPNDRTSA, HWFH…NCGG, EDDG…SDES, QPKKKRRRKRSRLHIGDGTTKMKGNSNYPM, and PYNP…TNPE. Basic residues predominate over residues 585-603; the sequence is HKSRRKKKRRKLCRYHPGK. The span at 604-666 shows a compositional bias: basic and acidic residues; the sequence is SSKEPEGSGK…ASTHLGEKET (63 aa). Composition is skewed to polar residues over residues 667–687 and 732–756; these read MNTTVNTESNDAAPGSQNCGG and LASQSNVKGPTQNQPVKRGYSSLTN. Residues 800 to 811 show a composition bias toward basic residues; that stretch reads PKKKRRRKRSRL. Residues 891–944 are compositionally biased toward polar residues; sequence TETTPCDSSQTSNDLATPVNVTRDPSNSTTDNTLLEHNQRSQTTNSNEKQTPFK.

The polypeptide is Zinc finger protein 804A (Znf804a) (Mus musculus (Mouse)).